We begin with the raw amino-acid sequence, 516 residues long: Cilia- and flagella-associated protein 53 (516 aa).

2 coiled-coil regions span residues 217–283 and 316–440; these read EEKK…LQVK and MQGY…RQMK. Composition is skewed to basic and acidic residues over residues 417–436 and 461–472; these read KELL…DRNA and QAEREEEQREFE. Disordered regions lie at residues 417–443 and 455–475; these read KELL…KVAQ and YQQS…EAGL.

It belongs to the CFAP53 family.

Its subcellular location is the cytoplasm. It is found in the cytoskeleton. The protein localises to the cilium axoneme. The protein resides in the microtubule organizing center. It localises to the centrosome. Its subcellular location is the centriolar satellite. Its function is as follows. Microtubule inner protein (MIP) part of the dynein-decorated doublet microtubules (DMTs) in cilia axoneme, which is required for motile cilia beating. Regulates motility patterns of both 9+0 and 9+2 motile cilia through differential localization and recruitment of axonemal dynein components. Required for motile cilium formation and movement. Involved in the establishment of left-right symmetry during embryogenesis. The chain is Cilia- and flagella-associated protein 53 from Xenopus laevis (African clawed frog).